The primary structure comprises 235 residues: Tetraspanin-8 (235 aa).

Topologically, residues 1–12 (MAGVSSCLKYSM) are cytoplasmic. Residues 13 to 33 (FFFNFLFWVCGTLILGLAIWV) form a helical membrane-spanning segment. At 34 to 52 (RVSKDGKEIITSGDSSTNP) the chain is on the extracellular side. The chain crosses the membrane as a helical span at residues 53-73 (FIAVNILIAVGSIIMVLGFLG). At 74–84 (CCGAVKESRCM) the chain is on the cytoplasmic side. A helical transmembrane segment spans residues 85–105 (LLLFFIGLLLILILQVAAGIL). At 106 to 203 (GAAFKPEYNR…SLIKDLFEKN (98 aa)) the chain is on the extracellular side. N-linked (GlcNAc...) asparagine glycosylation occurs at N118. A helical transmembrane segment spans residues 204-224 (IIIVIGIAFGLAVIEILGLVF). Topologically, residues 225–235 (SMVLYCQIGSK) are cytoplasmic.

This sequence belongs to the tetraspanin (TM4SF) family. Forms homooligomers. Interacts with MEP1B. Interacts with integrin alpha3/ITGA3. Interacts with RICTOR and MTOR. Interacts with ADAM17. Interacts with ECE1.

The protein resides in the cell membrane. In terms of biological role, structural component of specialized membrane microdomains known as tetraspanin-enriched microdomains (TERMs), which act as platforms for receptor clustering and signaling. Participates thereby in diverse biological functions such as cell signal transduction, migration and protein trafficking. Promotes ADAM17-mediated TNF-alpha processing through recruitment of ADAM17 to tetraspanin-enriched micro-domains (TEMs). Forms a complex with RICTOR and integrin alpha3/ITGA3 to mediate mTORC2 activation and AKT1 phosphorylation leading to cell migration. Reduces apoptosis and autophagy induced by high glucose levels through forming a complex with mTOR and RICTOR. Contributes to the maintenance of intestinal epithelial barrier and plays a role in the regulation of intestine inflammation by switching interferon gamma receptor 1/IFNGR1 from clathrin-dependent to lipid raft-dependent endocytosis route to limit STAT1 activation magnitude and duration. Acts as a modulator of the endothelin axis by associating with endothelin converting enzyme ECE1 and regulating its activity of conversion of the endothelin-1 precursor to endothelin. The sequence is that of Tetraspanin-8 (Tspan8) from Mus musculus (Mouse).